The sequence spans 135 residues: Small ribosomal subunit protein uS12 (135 aa).

3-methylthioaspartic acid is present on D89. Residues 108–135 form a disordered region; the sequence is NKRTVSRSKYGTKKAKATDKKATDSKKK. Residues 111–122 show a composition bias toward basic residues; that stretch reads TVSRSKYGTKKA. The span at 123-135 shows a compositional bias: basic and acidic residues; sequence KATDKKATDSKKK.

It belongs to the universal ribosomal protein uS12 family. In terms of assembly, part of the 30S ribosomal subunit. Contacts proteins S8 and S17. May interact with IF1 in the 30S initiation complex.

Functionally, with S4 and S5 plays an important role in translational accuracy. Interacts with and stabilizes bases of the 16S rRNA that are involved in tRNA selection in the A site and with the mRNA backbone. Located at the interface of the 30S and 50S subunits, it traverses the body of the 30S subunit contacting proteins on the other side and probably holding the rRNA structure together. The combined cluster of proteins S8, S12 and S17 appears to hold together the shoulder and platform of the 30S subunit. This chain is Small ribosomal subunit protein uS12, found in Helicobacter pylori (strain HPAG1).